A 124-amino-acid polypeptide reads, in one-letter code: Fluoride-specific ion channel FluC (124 aa).

The next 3 membrane-spanning stretches (helical) occupy residues Val36–Leu56, Tyr63–Leu83, and Ala99–Val119. Na(+) is bound by residues Gly73 and Thr76.

This sequence belongs to the fluoride channel Fluc/FEX (TC 1.A.43) family.

Its subcellular location is the cell inner membrane. The enzyme catalyses fluoride(in) = fluoride(out). With respect to regulation, na(+) is not transported, but it plays an essential structural role and its presence is essential for fluoride channel function. Functionally, fluoride-specific ion channel. Important for reducing fluoride concentration in the cell, thus reducing its toxicity. The protein is Fluoride-specific ion channel FluC of Cereibacter sphaeroides (strain ATCC 17029 / ATH 2.4.9) (Rhodobacter sphaeroides).